A 284-amino-acid polypeptide reads, in one-letter code: Rubber cis-polyprenyltransferase HRT2 (284 aa).

Residue D41 is part of the active site.

Belongs to the UPP synthase family. As to expression, predominantly expressed in latex.

The enzyme catalyses (cis-prenyl)(n)-diphosphate + isopentenyl diphosphate = (cis-prenyl)(n+1)-diphosphate + diphosphate. Proposed to be involved in rubber biosynthesis as a particle-bound rubber transferase responsible for the cis-1,4-polymerization of isoprene subunits. Probably requires additional factors for the production of high molecular mass rubber. This chain is Rubber cis-polyprenyltransferase HRT2 (HRT2), found in Hevea brasiliensis (Para rubber tree).